The chain runs to 276 residues: Glucosamine-6-phosphate deaminase 2 (276 aa).

The active-site Proton acceptor; for enolization step is D72. Positions 106 to 130 form a coiled coil; sequence ILDGNATDLQAECDAFEKKIKEAGG. D141 (for ring-opening step) is an active-site residue. The active-site Proton acceptor; for ring-opening step is the H143. E148 (for ring-opening step) is an active-site residue. T161 carries the post-translational modification Phosphothreonine.

The protein belongs to the glucosamine/galactosamine-6-phosphate isomerase family. Homohexamer.

It localises to the cytoplasm. The enzyme catalyses alpha-D-glucosamine 6-phosphate + H2O = beta-D-fructose 6-phosphate + NH4(+). Its pathway is nucleotide-sugar biosynthesis; UDP-N-acetyl-alpha-D-glucosamine biosynthesis; alpha-D-glucosamine 6-phosphate from D-fructose 6-phosphate: step 1/1. Its activity is regulated as follows. Allosterically activated by N-acetylglucosamine-6-phosphate (GlcNAc6P). Its function is as follows. Catalyzes the reversible conversion of alpha-D-glucosamine 6-phosphate (GlcN-6P) into beta-D-fructose 6-phosphate (Fru-6P) and ammonium ion, a regulatory reaction step in de novo uridine diphosphate-N-acetyl-alpha-D-glucosamine (UDP-GlcNAc) biosynthesis via hexosamine pathway. Deamination is coupled to aldo-keto isomerization mediating the metabolic flux from UDP-GlcNAc toward Fru-6P. At high ammonium level can drive amination and isomerization of Fru-6P toward hexosamines and UDP-GlcNAc synthesis. Has a role in fine tuning the metabolic fluctuations of cytosolic UDP-GlcNAc and their effects on hyaluronan synthesis that occur during tissue remodeling. The protein is Glucosamine-6-phosphate deaminase 2 of Bos taurus (Bovine).